The primary structure comprises 109 residues: Cell cycle protein GpsB (109 aa).

The stretch at 36 to 63 (IKDYETYAALVKSLRQEIADLKEELTRK) forms a coiled coil.

The protein belongs to the GpsB family. As to quaternary structure, forms polymers through the coiled coil domains. Interacts with PBP1, MreC and EzrA.

Its subcellular location is the cytoplasm. Functionally, divisome component that associates with the complex late in its assembly, after the Z-ring is formed, and is dependent on DivIC and PBP2B for its recruitment to the divisome. Together with EzrA, is a key component of the system that regulates PBP1 localization during cell cycle progression. Its main role could be the removal of PBP1 from the cell pole after pole maturation is completed. Also contributes to the recruitment of PBP1 to the division complex. Not essential for septum formation. The chain is Cell cycle protein GpsB from Streptococcus pneumoniae serotype 4 (strain ATCC BAA-334 / TIGR4).